Consider the following 96-residue polypeptide: MMCSSKNLLLAALMSVLLLHFCSKSEASNFDCCLRYTERILHPSILVGFTQQLANEACDINAVVFYTRKKLAVCADPKKKWVKQVVHMLSQRVKRM.

A signal peptide spans 1 to 26; it reads MMCSSKNLLLAALMSVLLLHFCSKSE. 2 disulfide bridges follow: cysteine 32/cysteine 58 and cysteine 33/cysteine 74.

Belongs to the intercrine beta (chemokine CC) family.

It localises to the secreted. Acts as a ligand for C-C chemokine receptor CCR6. Signals through binding and activation of CCR6 and induces a strong chemotactic response and mobilization of intracellular calcium ions. The ligand-receptor pair CCL20-CCR6 is responsible for the chemotaxis of dendritic cells (DC), effector/memory T-cells and B-cells and plays an important role at skin and mucosal surfaces under homeostatic and inflammatory conditions, as well as in pathology, including cancer and autoimmune diseases. CCL20 acts as a chemotactic factor that attracts lymphocytes and, slightly, neutrophils, but not monocytes. Involved in the recruitment of both the pro-inflammatory IL17 producing helper T-cells (Th17) and the regulatory T-cells (Treg) to sites of inflammation. Required for optimal migration of thymic natural regulatory T cells (nTregs) and DN1 early thymocyte progenitor cells. Positively regulates sperm motility and chemotaxis via its binding to CCR6 which triggers Ca2+ mobilization in the sperm which is important for its motility. May be involved in formation and function of the mucosal lymphoid tissues by attracting lymphocytes and dendritic cells towards epithelial cells. The polypeptide is C-C motif chemokine 20 (CCL20) (Bos taurus (Bovine)).